The sequence spans 508 residues: Gasdermin-C (508 aa).

Residues 1 to 257 (MPSMLERISK…VGYCAARSEG (257 aa)) are triggers pyroptosis.

It belongs to the gasdermin family. Homooligomer; homooligomeric ring-shaped pore complex containing 27-28 subunits when inserted in the membrane. In terms of processing, cleavage by CASP8 relieves autoinhibition by releasing the N-terminal moiety (Gasdermin-C, N-terminal) that initiates pyroptosis. The cleavage site is unclear. According to a publication, it takes place after Asp-240 in response to alpha-ketoglutarate. Another paper reports cleavage by CASP8 after Asp-365. Palmitoylated. In terms of tissue distribution, expressed mainly in trachea and spleen. In the esophagus, expressed in differentiating cells and probably in differentiated cells. Also detected in gastric epithelium.

Its subcellular location is the cytoplasm. It is found in the cytosol. The protein localises to the cell membrane. Its activity is regulated as follows. The full-length protein before cleavage is inactive: intramolecular interactions between N- and C-terminal domains mediate autoinhibition in the absence of activation signal. The intrinsic pyroptosis-inducing activity is carried by the released N-terminal moiety (Gasdermin-C, N-terminal) following cleavage by caspase CASP8. Its function is as follows. This form constitutes the precursor of the pore-forming protein: upon cleavage, the released N-terminal moiety (Gasdermin-C, N-terminal) binds to membranes and forms pores, triggering pyroptosis. Functionally, pore-forming protein that causes membrane permeabilization and pyroptosis. Produced by the cleavage of gasdermin-C by caspase CASP8 in response to death signals. After cleavage, moves to the plasma membrane where it strongly binds to membrane inner leaflet lipids. Homooligomerizes within the membrane and forms pores of 10-15 nanometers (nm) of inner diameter, triggering pyroptosis. The chain is Gasdermin-C from Homo sapiens (Human).